A 296-amino-acid polypeptide reads, in one-letter code: 2-haloacid dehalogenase, configuration-inverting (296 aa).

This sequence belongs to the HAD-like hydrolase superfamily. S-2-haloalkanoic acid dehalogenase family.

The enzyme catalyses an (S)-2-haloacid + H2O = a (2R)-2-hydroxycarboxylate + a halide anion + H(+). The catalysed reaction is an (R)-2-haloacid + H2O = a (2S)-2-hydroxycarboxylate + a halide anion + H(+). Dehalogenates both (S)- and (R)-2-haloalkanoic acids to the corresponding (R)- and (S)-hydroxyalkanoic acids, respectively, with inversion of configuration at C-2. Acts on 2-haloalkanoic acids whose carbon chain lengths are five or less. In Alcaligenes xylosoxydans xylosoxydans (Achromobacter xylosoxidans), this protein is 2-haloacid dehalogenase, configuration-inverting (dhlC).